Here is a 663-residue protein sequence, read N- to C-terminus: UvrABC system protein B (663 aa).

The segment covering 1–10 (MIDKRDDKPF) has biased composition (basic and acidic residues). The disordered stretch occupies residues 1 to 23 (MIDKRDDKPFKLKSKYKPSGDQP). The Helicase ATP-binding domain occupies 31–271 (DNIEGGEKAQ…EQSIAKIQAE (241 aa)). 44 to 51 (GATGTGKT) is an ATP binding site. The Beta-hairpin signature appears at 97 to 120 (YYDYYQPEAYVPSSDTYIEKDSSV). The Helicase C-terminal domain occupies 435 to 601 (QMDDLLGEIN…TIKKDIRGLI (167 aa)). The UVR domain maps to 627–662 (KEAINALQKQMQEAAELLDFELAAQMRDLILELKLM).

The protein belongs to the UvrB family. In terms of assembly, forms a heterotetramer with UvrA during the search for lesions. Interacts with UvrC in an incision complex.

The protein localises to the cytoplasm. The UvrABC repair system catalyzes the recognition and processing of DNA lesions. A damage recognition complex composed of 2 UvrA and 2 UvrB subunits scans DNA for abnormalities. Upon binding of the UvrA(2)B(2) complex to a putative damaged site, the DNA wraps around one UvrB monomer. DNA wrap is dependent on ATP binding by UvrB and probably causes local melting of the DNA helix, facilitating insertion of UvrB beta-hairpin between the DNA strands. Then UvrB probes one DNA strand for the presence of a lesion. If a lesion is found the UvrA subunits dissociate and the UvrB-DNA preincision complex is formed. This complex is subsequently bound by UvrC and the second UvrB is released. If no lesion is found, the DNA wraps around the other UvrB subunit that will check the other stand for damage. This is UvrABC system protein B from Streptococcus pyogenes serotype M4 (strain MGAS10750).